The following is a 726-amino-acid chain: Dipeptidyl-peptidase 5 (726 aa).

The N-terminal stretch at 1–19 (MAAAKWLIASLAFASSGLA) is a signal peptide. 2 N-linked (GlcNAc...) asparagine glycosylation sites follow: N96 and N252. The tract at residues 269–291 (AEPINKRNGPRTPQGIEGASSSP) is disordered. The Charge relay system role is filled by S558. The N-linked (GlcNAc...) asparagine glycan is linked to N605. Catalysis depends on charge relay system residues D641 and H673. Residue N699 is glycosylated (N-linked (GlcNAc...) asparagine).

It belongs to the peptidase S9C family.

It localises to the secreted. Functionally, extracellular dipeptidyl-peptidase which removes N-terminal dipeptides sequentially from polypeptides having unsubstituted N-termini. Contributes to pathogenicity. In Trichophyton tonsurans (Scalp ringworm fungus), this protein is Dipeptidyl-peptidase 5 (DPP5).